The primary structure comprises 237 residues: Peptidase E (237 aa).

Catalysis depends on charge relay system residues Ser122, Asp137, and His159.

It belongs to the peptidase S51 family.

It localises to the cytoplasm. It carries out the reaction Dipeptidase E catalyzes the hydrolysis of dipeptides Asp-|-Xaa. It does not act on peptides with N-terminal Glu, Asn or Gln, nor does it cleave isoaspartyl peptides.. In terms of biological role, hydrolyzes dipeptides containing N-terminal aspartate residues. May play a role in allowing the cell to use peptide aspartate to spare carbon otherwise required for the synthesis of the aspartate family of amino acids. This is Peptidase E from Shewanella baltica (strain OS185).